A 380-amino-acid chain; its full sequence is MAPNIRKNHPLLKMINSSLIDLPTPSNISAWWNFGSLLGICLLTQILTGLLLAAHYTADTTLAFSSVAHTCRNVQYGWLLRNLHANGASFFFICIYLHIGRGFYYGSYLFQETWNTGVVLLLTLMATAFVGYVLPWGQMSFWGATVITNLFSAVPYIGQTLVEWAWGGFSVDNPTLTRFFALHFLLPFMIAGLTLIHLTFLHESGSNNPLGIMSNSDKIPFHPYFSLKDILGFMIMLLLLTTLALFHPNLLSDPKNFTPANPLVTPSHIKPEWYFLFAYAILRSIPNKLGGVLALAASVLILFLIPFLHKSKQRALTFRPLSQLLFWLLVSNLFILTWIGSQPVEHPFIIIGQLASTTYFTIILVLFPITSALENKMLNY.

4 helical membrane passes run 34-54 (FGSLLGICLLTQILTGLLLAA), 78-99 (WLLRNLHANGASFFFICIYLHI), 114-134 (WNTGVVLLLTLMATAFVGYVL), and 179-199 (FFALHFLLPFMIAGLTLIHLT). Heme b contacts are provided by His-84 and His-98. Heme b-binding residues include His-183 and His-197. A ubiquinone is bound at residue His-202. Transmembrane regions (helical) follow at residues 227-247 (LKDILGFMIMLLLLTTLALFH), 289-309 (LGGVLALAASVLILFLIPFLH), 321-341 (LSQLLFWLLVSNLFILTWIGS), and 348-368 (FIIIGQLASTTYFTIILVLFP).

It belongs to the cytochrome b family. As to quaternary structure, the cytochrome bc1 complex contains 11 subunits: 3 respiratory subunits (MT-CYB, CYC1 and UQCRFS1), 2 core proteins (UQCRC1 and UQCRC2) and 6 low-molecular weight proteins (UQCRH/QCR6, UQCRB/QCR7, UQCRQ/QCR8, UQCR10/QCR9, UQCR11/QCR10 and a cleavage product of UQCRFS1). This cytochrome bc1 complex then forms a dimer. The cofactor is heme b.

It is found in the mitochondrion inner membrane. Its function is as follows. Component of the ubiquinol-cytochrome c reductase complex (complex III or cytochrome b-c1 complex) that is part of the mitochondrial respiratory chain. The b-c1 complex mediates electron transfer from ubiquinol to cytochrome c. Contributes to the generation of a proton gradient across the mitochondrial membrane that is then used for ATP synthesis. The chain is Cytochrome b (MT-CYB) from Trogon curucui (Blue-crowned trogon).